A 438-amino-acid polypeptide reads, in one-letter code: Enolase 1 (438 aa).

Substrate contacts are provided by His-160 and Glu-169. The active-site Proton donor is the Glu-212. Mg(2+)-binding residues include Asp-247, Glu-296, and Asp-321. 2 residues coordinate substrate: Glu-296 and Asp-321. Residue Lys-346 is the Proton acceptor of the active site. Substrate is bound by residues 373 to 376 (SHRS) and Lys-397.

The protein belongs to the enolase family. In terms of assembly, homodimer. Requires Mg(2+) as cofactor.

The protein resides in the cytoplasm. It catalyses the reaction (2R)-2-phosphoglycerate = phosphoenolpyruvate + H2O. It participates in carbohydrate degradation; glycolysis; pyruvate from D-glyceraldehyde 3-phosphate: step 4/5. This Candida glabrata (strain ATCC 2001 / BCRC 20586 / JCM 3761 / NBRC 0622 / NRRL Y-65 / CBS 138) (Yeast) protein is Enolase 1 (ENO1).